Consider the following 422-residue polypeptide: Lactoyl-CoA dehydratase subunit alpha (422 aa).

This sequence belongs to the FldB/FldC dehydratase alpha/beta subunit family. In terms of assembly, heterodimer of an alpha (LcdA) and a beta (LcdB) subunit. The cofactor is [4Fe-4S] cluster. It depends on FMN as a cofactor. Requires riboflavin as cofactor. Mg(2+) is required as a cofactor.

The enzyme catalyses (R)-lactoyl-CoA = acryloyl-CoA + H2O. It carries out the reaction (2R)-hydroxybutanoyl-CoA = (2E)-butenoyl-CoA + H2O. With respect to regulation, activated by the LcdC protein. Involved in the acrylate pathway for the conversion of D-lactic acid to propionic acid. Catalyzes the reversible dehydration of Lactoyl-CoA and 2-hydroxybutyroyl-CoA to acryloyl-CoA and crotonyl-CoA, respectively. In Anaerotignum propionicum (Clostridium propionicum), this protein is Lactoyl-CoA dehydratase subunit alpha (lcdA).